The following is a 454-amino-acid chain: CCA-adding enzyme (454 aa).

2 residues coordinate ATP: serine 59 and arginine 62. CTP contacts are provided by serine 59 and arginine 62. The Mg(2+) site is built by aspartate 71, aspartate 73, and aspartate 125. Histidine 148, lysine 167, and tyrosine 176 together coordinate ATP. CTP contacts are provided by histidine 148, lysine 167, and tyrosine 176.

Belongs to the tRNA nucleotidyltransferase/poly(A) polymerase family. Archaeal CCA-adding enzyme subfamily. Homodimer. Mg(2+) serves as cofactor.

The enzyme catalyses a tRNA precursor + 2 CTP + ATP = a tRNA with a 3' CCA end + 3 diphosphate. It catalyses the reaction a tRNA with a 3' CCA end + 2 CTP + ATP = a tRNA with a 3' CCACCA end + 3 diphosphate. Its function is as follows. Catalyzes the addition and repair of the essential 3'-terminal CCA sequence in tRNAs without using a nucleic acid template. Adds these three nucleotides in the order of C, C, and A to the tRNA nucleotide-73, using CTP and ATP as substrates and producing inorganic pyrophosphate. tRNA 3'-terminal CCA addition is required both for tRNA processing and repair. Also involved in tRNA surveillance by mediating tandem CCA addition to generate a CCACCA at the 3' terminus of unstable tRNAs. While stable tRNAs receive only 3'-terminal CCA, unstable tRNAs are marked with CCACCA and rapidly degraded. In Methanosarcina mazei (strain ATCC BAA-159 / DSM 3647 / Goe1 / Go1 / JCM 11833 / OCM 88) (Methanosarcina frisia), this protein is CCA-adding enzyme.